The chain runs to 187 residues: UPF0340 protein SPJ_0612 (187 aa).

This sequence belongs to the UPF0340 family.

In Streptococcus pneumoniae (strain JJA), this protein is UPF0340 protein SPJ_0612.